The chain runs to 201 residues: Guanylate kinase (201 aa).

Residues 2–180 (SCLFVISAPS…AARDVASIVQ (179 aa)) enclose the Guanylate kinase-like domain. 9–16 (APSGAGKT) contributes to the ATP binding site.

It belongs to the guanylate kinase family.

The protein resides in the cytoplasm. It carries out the reaction GMP + ATP = GDP + ADP. Essential for recycling GMP and indirectly, cGMP. This Nitrosomonas europaea (strain ATCC 19718 / CIP 103999 / KCTC 2705 / NBRC 14298) protein is Guanylate kinase.